The primary structure comprises 95 residues: Large ribosomal subunit protein uL23 (95 aa).

Belongs to the universal ribosomal protein uL23 family. In terms of assembly, part of the 50S ribosomal subunit. Contacts protein L29 and trigger factor when it is bound to the ribosome.

Its function is as follows. One of the early assembly protein it binds 23S rRNA. One of the proteins that surrounds the polypeptide exit tunnel on the outside of the subunit. Forms the main docking site for trigger factor binding to the ribosome. In Deinococcus radiodurans (strain ATCC 13939 / DSM 20539 / JCM 16871 / CCUG 27074 / LMG 4051 / NBRC 15346 / NCIMB 9279 / VKM B-1422 / R1), this protein is Large ribosomal subunit protein uL23.